We begin with the raw amino-acid sequence, 367 residues long: Heme A synthase (367 aa).

The next 5 helical transmembrane spans lie at 26 to 46 (IRGWLAAVLFALFALVLVGGA), 111 to 131 (LLARGIGVIFALPLFFFWVTG), 139 to 159 (LPLLGILALGGFQGFIGWWMV), 174 to 194 (LATHLTIACLIFAACMWIYRG), and 212 to 232 (AGAIAIMSLFQIYLGAIVAGL). H274 lines the heme pocket. The next 3 membrane-spanning stretches (helical) occupy residues 276–296 (LGAYLLFALALWHMIASLRAA), 305–325 (SVLLFALVTVQAAIGITTLLL), and 327–347 (VPIGWGVLHQGGALVVLGFAI). H335 contributes to the heme binding site.

This sequence belongs to the COX15/CtaA family. Type 2 subfamily. In terms of assembly, interacts with CtaB. Requires heme b as cofactor.

The protein resides in the cell membrane. It carries out the reaction Fe(II)-heme o + 2 A + H2O = Fe(II)-heme a + 2 AH2. Its pathway is porphyrin-containing compound metabolism; heme A biosynthesis; heme A from heme O: step 1/1. In terms of biological role, catalyzes the conversion of heme O to heme A by two successive hydroxylations of the methyl group at C8. The first hydroxylation forms heme I, the second hydroxylation results in an unstable dihydroxymethyl group, which spontaneously dehydrates, resulting in the formyl group of heme A. The chain is Heme A synthase from Rhizobium meliloti (strain 1021) (Ensifer meliloti).